A 106-amino-acid polypeptide reads, in one-letter code: Large ribosomal subunit protein uL23 (106 aa).

The protein belongs to the universal ribosomal protein uL23 family. Part of the 50S ribosomal subunit. Contacts protein L29, and trigger factor when it is bound to the ribosome.

In terms of biological role, one of the early assembly proteins it binds 23S rRNA. One of the proteins that surrounds the polypeptide exit tunnel on the outside of the ribosome. Forms the main docking site for trigger factor binding to the ribosome. The sequence is that of Large ribosomal subunit protein uL23 from Acinetobacter baylyi (strain ATCC 33305 / BD413 / ADP1).